A 226-amino-acid polypeptide reads, in one-letter code: Glutathione peroxidase 3 (226 aa).

A signal peptide spans 1 to 24 (MARILRASCLLSLLLAGFVPPGRG). The active site involves Sec-73. A non-standard amino acid (selenocysteine) is located at residue Sec-73.

Belongs to the glutathione peroxidase family. As to quaternary structure, homotetramer. Secreted in plasma.

Its subcellular location is the secreted. It catalyses the reaction 2 glutathione + H2O2 = glutathione disulfide + 2 H2O. It carries out the reaction tert-butyl hydroperoxide + 2 glutathione = tert-butanol + glutathione disulfide + H2O. Functionally, protects cells and enzymes from oxidative damage, by catalyzing the reduction of hydrogen peroxide, lipid peroxides and organic hydroperoxide, by glutathione. This chain is Glutathione peroxidase 3, found in Rattus norvegicus (Rat).